The following is a 494-amino-acid chain: Protein nucleotidyltransferase YdiU (494 aa).

ATP-binding residues include Gly-90, Gly-92, Arg-93, Lys-113, Asp-125, Gly-126, Arg-176, and Arg-183. Asp-252 (proton acceptor) is an active-site residue. Mg(2+) contacts are provided by Asn-253 and Asp-262. An ATP-binding site is contributed by Asp-262.

It belongs to the SELO family. The cofactor is Mg(2+). Mn(2+) is required as a cofactor.

The catalysed reaction is L-seryl-[protein] + ATP = 3-O-(5'-adenylyl)-L-seryl-[protein] + diphosphate. It carries out the reaction L-threonyl-[protein] + ATP = 3-O-(5'-adenylyl)-L-threonyl-[protein] + diphosphate. The enzyme catalyses L-tyrosyl-[protein] + ATP = O-(5'-adenylyl)-L-tyrosyl-[protein] + diphosphate. It catalyses the reaction L-histidyl-[protein] + UTP = N(tele)-(5'-uridylyl)-L-histidyl-[protein] + diphosphate. The catalysed reaction is L-seryl-[protein] + UTP = O-(5'-uridylyl)-L-seryl-[protein] + diphosphate. It carries out the reaction L-tyrosyl-[protein] + UTP = O-(5'-uridylyl)-L-tyrosyl-[protein] + diphosphate. Its function is as follows. Nucleotidyltransferase involved in the post-translational modification of proteins. It can catalyze the addition of adenosine monophosphate (AMP) or uridine monophosphate (UMP) to a protein, resulting in modifications known as AMPylation and UMPylation. The polypeptide is Protein nucleotidyltransferase YdiU (Alkalilimnicola ehrlichii (strain ATCC BAA-1101 / DSM 17681 / MLHE-1)).